We begin with the raw amino-acid sequence, 481 residues long: Ankyrin repeat, SAM and basic leucine zipper domain-containing protein 1 (481 aa).

The segment covering 1–16 (MASGGLRGLAVAGGGE) has biased composition (gly residues). The interval 1–23 (MASGGLRGLAVAGGGESSDSEDD) is disordered. Phosphoserine is present on residues S17, S18, and S20. 6 ANK repeats span residues 45-74 (EKNETFKKALTTGDISLVQELLDSGISVDS), 78-107 (YGWTPLMYAASIANVELVRVLLDRGANASF), 110-144 (DKQTILITACSARGSEEQILKCVELLLSRNADPNV), 148-177 (RLMTPIMYAARDGHPQVVAVLVAHGAEVNT), 181-210 (NGYTALTWAARQGHKNVVLKLLELGANKML), and 214-243 (DGKIPSEIAKRNKHLEIFNFLSLTLNPLEG). The 63-residue stretch at 272–334 (SYTAFGDLEI…KILSALKELE (63 aa)) folds into the SAM domain.

As to quaternary structure, interacts with DDX4, PIWIL1, RANBP9 and TDRD1.

The protein localises to the cytoplasm. Plays a central role during spermatogenesis by repressing transposable elements and preventing their mobilization, which is essential for the germline integrity. Acts via the piRNA metabolic process, which mediates the repression of transposable elements during meiosis by forming complexes composed of piRNAs and Piwi proteins and governs the methylation and subsequent repression of transposons. Its association with pi-bodies suggests a participation in the primary piRNAs metabolic process. Required prior to the pachytene stage to facilitate the production of multiple types of piRNAs, including those associated with repeats involved in the regulation of retrotransposons. May act by mediating protein-protein interactions during germ cell maturation. This Microcebus murinus (Gray mouse lemur) protein is Ankyrin repeat, SAM and basic leucine zipper domain-containing protein 1 (ASZ1).